A 611-amino-acid polypeptide reads, in one-letter code: Developmental and secondary metabolism regulator veA (611 aa).

3 disordered regions span residues 1–57 (MNRK…RPVD), 222–497 (RRRE…ASFD), and 511–611 (LEAS…PGHA). Residues 14–23 (KSSATRTTND) show a composition bias toward polar residues. The Velvet domain maps to 24–216 (GRAITYEMQV…AEQGCRVRIR (193 aa)). A Nuclear localization signal motif is present at residues 38–43 (QRARAC). Over residues 242-254 (AARARASATPDPS) the composition is skewed to low complexity. A compositionally biased stretch (polar residues) spans 274–290 (SASNASHQSLGSISRRP). Low complexity predominate over residues 330-340 (YPPNQFVQQQP). Residues 341-361 (PMQPPLPQYQPPNYPAPPPPV) show a composition bias toward pro residues. The segment covering 362–377 (TAAQQPQPAQSYYNYP) has biased composition (low complexity). A compositionally biased stretch (polar residues) spans 419-434 (RNSQQIPPTSQPTAYT). 2 stretches are compositionally biased toward low complexity: residues 435–452 (QPMQ…QHYQ) and 461–471 (QASQHSSYSSM). The segment at 455 to 499 (PPPPPSQASQHSSYSSMDLYNSRPAPIEPHHHGNTPASKASFDLP) is PEST. Positions 511-533 (LEASSPTSVAPTNAYFSGGQTPI) are enriched in polar residues.

It belongs to the velvet family. VeA subfamily. In terms of assembly, component of the heterotrimeric velvet complex composed of laeA, veA and velB; VeA acting as a bridging protein between laeA and velB.

It localises to the nucleus. The protein localises to the cytoplasm. Component of the velvet transcription factor complex that controls sexual/asexual developmental ratio in response to light, promoting sexual development in the darkness while stimulating asexual sporulation under illumination. The velvet complex hat acts as a global regulator for secondary metabolite gene expression. Controls the expression of the dothistromin gene cluster. Regulates hyphal growth and pigment formation. Acts as a positive regulator of virulence. The sequence is that of Developmental and secondary metabolism regulator veA from Dothistroma septosporum (strain NZE10 / CBS 128990) (Red band needle blight fungus).